Here is a 292-residue protein sequence, read N- to C-terminus: Ribosomal protein L11 methyltransferase (292 aa).

Thr-144, Gly-165, Asp-187, and Asn-229 together coordinate S-adenosyl-L-methionine.

Belongs to the methyltransferase superfamily. PrmA family.

Its subcellular location is the cytoplasm. It carries out the reaction L-lysyl-[protein] + 3 S-adenosyl-L-methionine = N(6),N(6),N(6)-trimethyl-L-lysyl-[protein] + 3 S-adenosyl-L-homocysteine + 3 H(+). Methylates ribosomal protein L11. This Pseudomonas putida (strain ATCC 47054 / DSM 6125 / CFBP 8728 / NCIMB 11950 / KT2440) protein is Ribosomal protein L11 methyltransferase.